Reading from the N-terminus, the 690-residue chain is Cysteine-rich receptor-like protein kinase 21 (690 aa).

The signal sequence occupies residues 1 to 24 (MQKNKMVDLRAIFWFVVISSCAVA). Residues 25–129 (APTCIQRSDF…CLVRYSNHLI (105 aa)) form the Gnk2-homologous 1 domain. Topologically, residues 25 to 281 (APTCIQRSDF…KDGKNISTGS (257 aa)) are extracellular. N-linked (GlcNAc...) asparagine glycosylation is found at asparagine 130, asparagine 148, asparagine 155, asparagine 220, asparagine 268, and asparagine 276. The Gnk2-homologous 2 domain maps to 140–246 (AEYIEYKYNT…CFMRWDLQPF (107 aa)). Residues 282–302 (IVAIAVVSVVVSTVLLALGYA) form a helical membrane-spanning segment. Topologically, residues 303–690 (VSRRRKAYQS…DASITSVRPR (388 aa)) are cytoplasmic. Positions 363–640 (FHKSNKLGHG…IFRMLTNVSI (278 aa)) constitute a Protein kinase domain. ATP is bound by residues 369–377 (LGHGGFGAV) and lysine 391. Tyrosine 436 carries the phosphotyrosine modification. Catalysis depends on aspartate 488, which acts as the Proton acceptor. A Phosphoserine modification is found at serine 492. Threonine 528 is subject to Phosphothreonine. Residue tyrosine 536 is modified to Phosphotyrosine.

The protein belongs to the protein kinase superfamily. Ser/Thr protein kinase family. CRK subfamily.

The protein resides in the membrane. It catalyses the reaction L-seryl-[protein] + ATP = O-phospho-L-seryl-[protein] + ADP + H(+). The catalysed reaction is L-threonyl-[protein] + ATP = O-phospho-L-threonyl-[protein] + ADP + H(+). This is Cysteine-rich receptor-like protein kinase 21 (CRK21) from Arabidopsis thaliana (Mouse-ear cress).